Reading from the N-terminus, the 309-residue chain is Homoserine kinase (309 aa).

An ATP-binding site is contributed by 91-101 (PIGSGLGSSAC).

This sequence belongs to the GHMP kinase family. Homoserine kinase subfamily.

The protein resides in the cytoplasm. It carries out the reaction L-homoserine + ATP = O-phospho-L-homoserine + ADP + H(+). It functions in the pathway amino-acid biosynthesis; L-threonine biosynthesis; L-threonine from L-aspartate: step 4/5. In terms of biological role, catalyzes the ATP-dependent phosphorylation of L-homoserine to L-homoserine phosphate. This Klebsiella pneumoniae subsp. pneumoniae (strain ATCC 700721 / MGH 78578) protein is Homoserine kinase.